Consider the following 548-residue polypeptide: CTP synthase (548 aa).

The segment at 1-266 (MRVNYIFVTG…DNYICKRFNL (266 aa)) is amidoligase domain. S14 is a CTP binding site. S14 is a binding site for UTP. Residues 15–20 (SLGKGI) and D72 each bind ATP. The Mg(2+) site is built by D72 and E140. Residues 147 to 149 (DIE), 187 to 192 (KTKPTQ), and K223 each bind CTP. Residues 187–192 (KTKPTQ) and K223 contribute to the UTP site. The region spanning 291–543 (TVGMVGKYIE…IKAAIEYQHR (253 aa)) is the Glutamine amidotransferase type-1 domain. G353 contributes to the L-glutamine binding site. The active-site Nucleophile; for glutamine hydrolysis is C380. Residues 381-384 (LGMQ), E404, and R471 each bind L-glutamine. Catalysis depends on residues H516 and E518.

Belongs to the CTP synthase family. Homotetramer.

The catalysed reaction is UTP + L-glutamine + ATP + H2O = CTP + L-glutamate + ADP + phosphate + 2 H(+). It catalyses the reaction L-glutamine + H2O = L-glutamate + NH4(+). The enzyme catalyses UTP + NH4(+) + ATP = CTP + ADP + phosphate + 2 H(+). It participates in pyrimidine metabolism; CTP biosynthesis via de novo pathway; CTP from UDP: step 2/2. With respect to regulation, allosterically activated by GTP, when glutamine is the substrate; GTP has no effect on the reaction when ammonia is the substrate. The allosteric effector GTP functions by stabilizing the protein conformation that binds the tetrahedral intermediate(s) formed during glutamine hydrolysis. Inhibited by the product CTP, via allosteric rather than competitive inhibition. Functionally, catalyzes the ATP-dependent amination of UTP to CTP with either L-glutamine or ammonia as the source of nitrogen. Regulates intracellular CTP levels through interactions with the four ribonucleotide triphosphates. The protein is CTP synthase of Blochmanniella pennsylvanica (strain BPEN).